The following is a 210-amino-acid chain: Ribosomal RNA large subunit methyltransferase E (210 aa).

S-adenosyl-L-methionine contacts are provided by Gly-67, Trp-69, Asp-87, Asp-103, and Asp-128. The active-site Proton acceptor is the Lys-168.

This sequence belongs to the class I-like SAM-binding methyltransferase superfamily. RNA methyltransferase RlmE family.

It localises to the cytoplasm. The enzyme catalyses uridine(2552) in 23S rRNA + S-adenosyl-L-methionine = 2'-O-methyluridine(2552) in 23S rRNA + S-adenosyl-L-homocysteine + H(+). Functionally, specifically methylates the uridine in position 2552 of 23S rRNA at the 2'-O position of the ribose in the fully assembled 50S ribosomal subunit. The chain is Ribosomal RNA large subunit methyltransferase E from Psychrobacter arcticus (strain DSM 17307 / VKM B-2377 / 273-4).